The following is a 595-amino-acid chain: Sucrose transport protein SUT4 (595 aa).

Residues methionine 1–lysine 61 are Cytoplasmic-facing. A disordered region spans residues serine 29–arginine 55. A helical membrane pass occupies residues leucine 62–leucine 82. Residues leucine 83–alanine 97 are Extracellular-facing. The chain crosses the membrane as a helical span at residues serine 98–tryptophan 118. Over serine 119–arginine 130 the chain is Cytoplasmic. Residues proline 131–alanine 151 form a helical membrane-spanning segment. Topologically, residues aspartate 152 to arginine 173 are extracellular. Residues alanine 174–glycine 194 form a helical membrane-spanning segment. Residues proline 195 to asparagine 213 are Cytoplasmic-facing. A helical transmembrane segment spans residues alanine 214–glycine 234. Topologically, residues asparagine 235–lysine 256 are extracellular. Residues alanine 257–alanine 277 form a helical membrane-spanning segment. The Cytoplasmic segment spans residues glutamate 278–glycine 365. The interval serine 291–asparagine 340 is disordered. Over residues threonine 320–serine 334 the composition is skewed to polar residues. A helical transmembrane segment spans residues methionine 366–phenylalanine 386. Topologically, residues aspartate 387–glycine 417 are extracellular. A glycan (N-linked (GlcNAc...) asparagine) is linked at asparagine 403. The chain crosses the membrane as a helical span at residues alanine 418–leucine 438. Residues cysteine 439–valine 447 are Cytoplasmic-facing. Residues tryptophan 448–isoleucine 468 traverse the membrane as a helical segment. The Extracellular portion of the chain corresponds to serine 469–alanine 491. N-linked (GlcNAc...) asparagine glycosylation occurs at asparagine 484. The helical transmembrane segment at leucine 492 to valine 512 threads the bilayer. Residues threonine 513–glycine 525 lie on the Cytoplasmic side of the membrane. The chain crosses the membrane as a helical span at residues leucine 526 to alanine 546. The Extracellular segment spans residues glycine 547–glycine 556. Residues asparagine 557–leucine 577 traverse the membrane as a helical segment. The Cytoplasmic portion of the chain corresponds to lysine 578 to glycine 595.

It belongs to the glycoside-pentoside-hexuronide (GPH) cation symporter transporter (TC 2.A.2.4) family. In terms of assembly, homodimer.

The protein localises to the cell membrane. It functions in the pathway glycan biosynthesis; sucrose metabolism. Functionally, responsible for the transport of sucrose into the cell, with the concomitant uptake of protons (symport system). May also transport other glucosides. This chain is Sucrose transport protein SUT4 (SUT4), found in Oryza sativa subsp. indica (Rice).